Reading from the N-terminus, the 395-residue chain is Calcium sensing receptor, chloroplastic (395 aa).

Residues 1–12 (MAPVPVSVSATL) show a composition bias toward low complexity. The disordered stretch occupies residues 1–27 (MAPVPVSVSATLAPPPAAPPKTTSRSW). A chloroplast-targeting transit peptide spans 1 to 39 (MAPVPVSVSATLAPPPAAPPKTTSRSWERRAPADAAFAA). Over 40–182 (ASSVAGSAAL…TITSLGPEDY (143 aa)) the chain is Lumenal, thylakoid. Residues 183–203 (VVAAGXAFLAYLLVPPVWSLV) form a helical membrane-spanning segment. Topologically, residues 204–395 (SSSLRGYKGD…TRKLLPGGVD (192 aa)) are stromal. The Rhodanese domain maps to 224–345 (TTQGYVLIDV…WAQSRLGTDS (122 aa)). Residue Thr-377 is modified to Phosphothreonine.

In terms of processing, phosphorylated in both bundle sheath and mesophyll cells, under both low and high light regimes (70 vs 900 umol photons/m-2/s).

It localises to the plastid. Its subcellular location is the chloroplast thylakoid membrane. In terms of biological role, modulates cytoplasmic Ca(2+) concentration and is crucial for proper stomatal regulation in response to elevated levels of external Ca(2+). May function by regulating concentrations of inositol 1,4,5-trisphosphate (IP3), which in turn triggers release of Ca(2+) from internal stores. May play a role in de-etiolation. The polypeptide is Calcium sensing receptor, chloroplastic (Zea mays (Maize)).